Reading from the N-terminus, the 124-residue chain is MTQDARARGQNAHFAGAAAEEIAIRAYLARGLTLVKSRWRGPHGEIDLILRDGETVIFAEVKSSTTRDKAAARIKPAQMQRVFNSAGAFLEGEPLGQLTPARLDVVLVWGAGEVEIIENAYGHG.

The protein belongs to the UPF0102 family.

This chain is UPF0102 protein TM1040_0449, found in Ruegeria sp. (strain TM1040) (Silicibacter sp.).